A 730-amino-acid chain; its full sequence is Heterogeneous nuclear ribonucleoprotein M (730 aa).

A compositionally biased stretch (low complexity) spans 1 to 13; sequence MAAGVEAAAEVAA. The segment at 1-62 is disordered; it reads MAAGVEAAAE…NIKRGGNRFE (62 aa). Ala2 carries the N-acetylalanine modification. A Glycyl lysine isopeptide (Lys-Gly) (interchain with G-Cter in SUMO2) cross-link involves residue Lys17. A Phosphoserine modification is found at Ser29. Lys37 participates in a covalent cross-link: Glycyl lysine isopeptide (Lys-Gly) (interchain with G-Cter in SUMO2). The span at 38–50 shows a compositional bias: basic and acidic residues; that stretch reads GEGERPAQNEKRK. Glycyl lysine isopeptide (Lys-Gly) (interchain with G-Cter in SUMO2) cross-links involve residues Lys69 and Lys83. RRM domains follow at residues 71 to 149 and 204 to 281; these read YRAF…EDPD and STVF…MDER. Ser86 is subject to Phosphoserine. Glycyl lysine isopeptide (Lys-Gly) (interchain with G-Cter in SUMO2) cross-links involve residues Lys88 and Lys127. N6-acetyllysine; alternate is present on Lys134. Lys134 participates in a covalent cross-link: Glycyl lysine isopeptide (Lys-Gly) (interchain with G-Cter in SUMO2); alternate. Glycyl lysine isopeptide (Lys-Gly) (interchain with G-Cter in SUMO2) cross-links involve residues Lys143 and Lys145. Ser204 carries the phosphoserine modification. A Glycyl lysine isopeptide (Lys-Gly) (interchain with G-Cter in SUMO2) cross-link involves residue Lys221. At Lys277 the chain carries N6-acetyllysine; alternate. A Glycyl lysine isopeptide (Lys-Gly) (interchain with G-Cter in SUMO2); alternate cross-link involves residue Lys277. Glycyl lysine isopeptide (Lys-Gly) (interchain with G-Cter in SUMO2) cross-links involve residues Lys285 and Lys345. 2 positions are modified to phosphoserine: Ser365 and Ser377. Residues Lys381 and Lys388 each participate in a glycyl lysine isopeptide (Lys-Gly) (interchain with G-Cter in SUMO2) cross-link. Ser397 is subject to Phosphoserine. 4 repeat units span residues 400 to 405, 407 to 412, 415 to 420, and 426 to 431. Residues 400-608 are 27 X 6 AA repeats of [GEVSTPAN]-[ILMV]-[DE]-[RH]-[MLVI]-[GAV]; that stretch reads GIERMGPGID…ALGAGIERMG (209 aa). Ser432 is modified (phosphoserine). 3 consecutive repeat copies span residues 433–438, 440–445, and 446–451. Ser452 bears the Phosphoserine mark. 4 consecutive repeat copies span residues 453 to 458, 461 to 466, 468 to 473, and 475 to 480. Ser468 carries the phosphoserine modification. Ser481 carries the phosphoserine modification. Repeat copies occupy residues 482 to 487, 493 to 498, 500 to 505, 507 to 512, 514 to 519, 521 to 526, 528 to 533, 540 to 545, 547 to 552, 554 to 559, 562 to 566, 567 to 572, 575 to 579, 580 to 585, 588 to 593, and 603 to 608. Residue Arg496 is modified to Omega-N-methylarginine. Phosphoserine is present on Ser528. Ser575 is subject to Phosphoserine. Ser588 is subject to Phosphoserine. Phosphoserine is present on residues Ser618, Ser633, and Ser637. Residue Lys651 forms a Glycyl lysine isopeptide (Lys-Gly) (interchain with G-Cter in SUMO2) linkage. Residues 653–729 enclose the RRM 3 domain; that stretch reads CQIFVRNLPF…REIDVRIDRN (77 aa). Thr665 is subject to Phosphothreonine. A Glycyl lysine isopeptide (Lys-Gly) (interchain with G-Cter in SUMO2) cross-link involves residue Lys667. An N6-acetyllysine modification is found at Lys672. Residues Lys685 and Lys692 each participate in a glycyl lysine isopeptide (Lys-Gly) (interchain with G-Cter in SUMO2) cross-link. Lys698 bears the N6-acetyllysine; alternate mark. Residue Lys698 forms a Glycyl lysine isopeptide (Lys-Gly) (interchain with G-Cter in SUMO2); alternate linkage. Residue Lys698 forms a Glycyl lysine isopeptide (Lys-Gly) (interchain with G-Cter in SUMO1); alternate linkage. Phosphoserine is present on Ser701. Lys716 is covalently cross-linked (Glycyl lysine isopeptide (Lys-Gly) (interchain with G-Cter in SUMO2)).

As to quaternary structure, identified in the spliceosome C complex. Interacts with PPIA/CYPA. In terms of processing, sumoylated.

The protein resides in the nucleus. It localises to the nucleolus. Functionally, pre-mRNA binding protein in vivo, binds avidly to poly(G) and poly(U) RNA homopolymers in vitro. Involved in splicing. Acts as a receptor for carcinoembryonic antigen in Kupffer cells, may initiate a series of signaling events leading to tyrosine phosphorylation of proteins and induction of IL-1 alpha, IL-6, IL-10 and tumor necrosis factor alpha cytokines. The chain is Heterogeneous nuclear ribonucleoprotein M (HNRNPM) from Homo sapiens (Human).